The following is a 603-amino-acid chain: DNA mismatch repair protein MutL (603 aa).

It belongs to the DNA mismatch repair MutL/HexB family.

In terms of biological role, this protein is involved in the repair of mismatches in DNA. It is required for dam-dependent methyl-directed DNA mismatch repair. May act as a 'molecular matchmaker', a protein that promotes the formation of a stable complex between two or more DNA-binding proteins in an ATP-dependent manner without itself being part of a final effector complex. This chain is DNA mismatch repair protein MutL, found in Nitrobacter hamburgensis (strain DSM 10229 / NCIMB 13809 / X14).